The following is a 153-amino-acid chain: Mediator of RNA polymerase II transcription subunit 22 (153 aa).

The protein belongs to the Mediator complex subunit 22 family. In terms of assembly, component of the Mediator complex.

Its subcellular location is the nucleus. Functionally, component of the Mediator complex, a coactivator involved in the regulated transcription of nearly all RNA polymerase II-dependent genes. Mediator functions as a bridge to convey information from gene-specific regulatory proteins to the basal RNA polymerase II transcription machinery. Mediator is recruited to promoters by direct interactions with regulatory proteins and serves as a scaffold for the assembly of a functional preinitiation complex with RNA polymerase II and the general transcription factors. The polypeptide is Mediator of RNA polymerase II transcription subunit 22 (mdt-22) (Caenorhabditis briggsae).